The following is a 410-amino-acid chain: Secreted protein PRY1 (410 aa).

An N-terminal signal peptide occupies residues 1 to 20 (MKQNYILSIILCYLLANVHS). Disordered regions lie at residues 64–86 (PAPV…STPS), 102–132 (SDSD…SSSS), and 148–260 (SSSS…SSSS). The segment covering 148–179 (SSSSTPSSISQQQQQQQGSPASGSNSPNSAQP) has biased composition (low complexity). Residues 197–211 (SGLGSGFGSGFGSGS) show a composition bias toward gly residues. Low complexity predominate over residues 212–260 (GSDSDSGSGLPSASSSTIIQQQPSSSNIGSSSTSSSSSSSSSSSSSSSS). An SCP domain is found at 283–394 (LDAHNKYRAQ…NWGLYVVCEY (112 aa)).

This sequence belongs to the CRISP family.

It is found in the secreted. Functionally, secreted protein that acts as a virulence factor during infections. This is Secreted protein PRY1 (PRY1) from Candida albicans (strain SC5314 / ATCC MYA-2876) (Yeast).